The chain runs to 120 residues: uncharacterized protein (120 aa).

The next 2 membrane-spanning stretches (helical) occupy residues 8 to 28 and 55 to 75; these read PFVTGVLLPSAVFSFLFCTLV and FLENTLIFLGSGNLTAHIGIL.

It localises to the membrane. This is an uncharacterized protein from Saccharomyces cerevisiae (strain ATCC 204508 / S288c) (Baker's yeast).